The primary structure comprises 82 residues: UPF0248 protein Mevan_1298 (82 aa).

Belongs to the UPF0248 family.

The chain is UPF0248 protein Mevan_1298 from Methanococcus vannielii (strain ATCC 35089 / DSM 1224 / JCM 13029 / OCM 148 / SB).